A 505-amino-acid polypeptide reads, in one-letter code: Phosphoethanolamine N-methyltransferase (505 aa).

S-adenosyl-L-homocysteine is bound by residues Gly-76, Arg-81, Asp-97, Asp-122, Val-123, and Asn-141. The phosphocholine site is built by Ser-174, Ser-179, Gly-180, Arg-184, and Tyr-191. N-methylethanolamine phosphate contacts are provided by residues Gln-260–Tyr-261 and Tyr-269. Tyr-269 contacts phosphocholine. The S-adenosyl-L-homocysteine site is built by Val-278, Ser-279, Gly-305, Asp-327, Asp-353, Cys-354, and Arg-370. Residues Tyr-401, Tyr-415, Arg-419, Tyr-421, and Lys-487 each contribute to the phosphocholine site. Residues Tyr-401, Tyr-415, Arg-419 to Tyr-421, and Lys-487 each bind N-methylethanolamine phosphate.

This sequence belongs to the class I-like SAM-binding methyltransferase superfamily. PEAMT family.

The enzyme catalyses phosphoethanolamine + S-adenosyl-L-methionine = N-methylethanolamine phosphate + S-adenosyl-L-homocysteine + H(+). It catalyses the reaction N-methylethanolamine phosphate + S-adenosyl-L-methionine = N,N-dimethylethanolamine phosphate + S-adenosyl-L-homocysteine + H(+). It carries out the reaction N,N-dimethylethanolamine phosphate + S-adenosyl-L-methionine = phosphocholine + S-adenosyl-L-homocysteine + H(+). It participates in phospholipid metabolism; phosphatidylcholine biosynthesis; phosphocholine from phosphoethanolamine: step 1/1. Inhibited by phosphatidic acid. Involved in phosphocholine biosynthesis. Catalyzes the N-methylation of phosphoethanolamine, phosphomonomethylethanolamine and phosphodimethylethanolamine, the three methylation steps required to convert phosphoethanolamine to phosphocholine (PC). The chain is Phosphoethanolamine N-methyltransferase from Triticum aestivum (Wheat).